A 364-amino-acid chain; its full sequence is 3-isopropylmalate dehydrogenase (364 aa).

NAD(+) is bound at residue 78–91 (GKKWDNFPIEERPE). Residues R99, R109, R138, and D228 each coordinate substrate. Mg(2+)-binding residues include D228, D252, and D256. NAD(+) is bound at residue 286–298 (GSAPDIAGKNIAN).

The protein belongs to the isocitrate and isopropylmalate dehydrogenases family. LeuB type 1 subfamily. As to quaternary structure, homodimer. It depends on Mg(2+) as a cofactor. Requires Mn(2+) as cofactor.

Its subcellular location is the cytoplasm. It carries out the reaction (2R,3S)-3-isopropylmalate + NAD(+) = 4-methyl-2-oxopentanoate + CO2 + NADH. It functions in the pathway amino-acid biosynthesis; L-leucine biosynthesis; L-leucine from 3-methyl-2-oxobutanoate: step 3/4. Its function is as follows. Catalyzes the oxidation of 3-carboxy-2-hydroxy-4-methylpentanoate (3-isopropylmalate) to 3-carboxy-4-methyl-2-oxopentanoate. The product decarboxylates to 4-methyl-2 oxopentanoate. The protein is 3-isopropylmalate dehydrogenase of Buchnera aphidicola subsp. Uroleucon obscurum.